The sequence spans 667 residues: Long-chain-fatty-acid--CoA ligase ACSBG2 (667 aa).

ATP is bound by residues 227–235 (TSGTTGTPK), 418–423 (EIYGMS), D496, R511, and R624.

Belongs to the ATP-dependent AMP-binding enzyme family. Bubblegum subfamily. As to expression, testis- and brainstem-specific. Expressed in pubertal and adult testis. Enriched in germ cells and Sertoli cells while present at a lower level in Leydig cells. Present in testicular Sertoli cells and large motoneurons in the medulla oblongata and cervical spinal cord (at protein level).

It is found in the cytoplasm. The protein resides in the membrane. The catalysed reaction is a long-chain fatty acid + ATP + CoA = a long-chain fatty acyl-CoA + AMP + diphosphate. It carries out the reaction (5Z,8Z,11Z,14Z)-eicosatetraenoate + ATP + CoA = (5Z,8Z,11Z,14Z)-eicosatetraenoyl-CoA + AMP + diphosphate. The enzyme catalyses hexadecanoate + ATP + CoA = hexadecanoyl-CoA + AMP + diphosphate. It catalyses the reaction (9Z)-octadecenoate + ATP + CoA = (9Z)-octadecenoyl-CoA + AMP + diphosphate. The catalysed reaction is (9Z,12Z)-octadecadienoate + ATP + CoA = (9Z,12Z)-octadecadienoyl-CoA + AMP + diphosphate. It carries out the reaction tetracosanoate + ATP + CoA = tetracosanoyl-CoA + AMP + diphosphate. Its function is as follows. Catalyzes the conversion of fatty acids such as long chain and very long-chain fatty acids to their active form acyl-CoAs for both synthesis of cellular lipids, and degradation via beta-oxidation. Can activate diverse saturated, monosaturated and polyunsaturated fatty acids. Has increased ability to activate oleic and linoleic acid. May play a role in spermatogenesis. The chain is Long-chain-fatty-acid--CoA ligase ACSBG2 from Mus musculus (Mouse).